Reading from the N-terminus, the 386-residue chain is Protein-glutamate methylesterase/protein-glutamine glutaminase (386 aa).

The Response regulatory domain maps to 4-121; sequence KVLVVDDSAF…ARNRDEAVKT (118 aa). D55 carries the 4-aspartylphosphate modification. Residues 133-161 form a disordered region; it reads PVSRTSARASTPPPVAKQPERSSEPTTAL. One can recognise a CheB-type methylesterase domain in the interval 190-384; that stretch reads INRAYQLLAI…KAIMKEVGYS (195 aa). Residues S202, H229, and D326 contribute to the active site.

Belongs to the CheB family. Phosphorylated by CheA. Phosphorylation of the N-terminal regulatory domain activates the methylesterase activity.

The protein resides in the cytoplasm. The enzyme catalyses [protein]-L-glutamate 5-O-methyl ester + H2O = L-glutamyl-[protein] + methanol + H(+). It catalyses the reaction L-glutaminyl-[protein] + H2O = L-glutamyl-[protein] + NH4(+). In terms of biological role, involved in chemotaxis. Part of a chemotaxis signal transduction system that modulates chemotaxis in response to various stimuli. Catalyzes the demethylation of specific methylglutamate residues introduced into the chemoreceptors (methyl-accepting chemotaxis proteins or MCP) by CheR. Also mediates the irreversible deamidation of specific glutamine residues to glutamic acid. The sequence is that of Protein-glutamate methylesterase/protein-glutamine glutaminase from Idiomarina loihiensis (strain ATCC BAA-735 / DSM 15497 / L2-TR).